Reading from the N-terminus, the 494-residue chain is Cysteine--tRNA ligase (494 aa).

C29 provides a ligand contact to Zn(2+). A 'HIGH' region motif is present at residues 31–41 (VTVYDHCHIGH). C209, H234, and E238 together coordinate Zn(2+). Positions 266–270 (KMSKS) match the 'KMSKS' region motif. K269 contacts ATP.

It belongs to the class-I aminoacyl-tRNA synthetase family. As to quaternary structure, monomer. Zn(2+) serves as cofactor.

It localises to the cytoplasm. It catalyses the reaction tRNA(Cys) + L-cysteine + ATP = L-cysteinyl-tRNA(Cys) + AMP + diphosphate. This chain is Cysteine--tRNA ligase, found in Geotalea uraniireducens (strain Rf4) (Geobacter uraniireducens).